The primary structure comprises 447 residues: Probable glycine dehydrogenase (decarboxylating) subunit 1 (447 aa).

This sequence belongs to the GcvP family. N-terminal subunit subfamily. As to quaternary structure, the glycine cleavage system is composed of four proteins: P, T, L and H. In this organism, the P 'protein' is a heterodimer of two subunits.

The enzyme catalyses N(6)-[(R)-lipoyl]-L-lysyl-[glycine-cleavage complex H protein] + glycine + H(+) = N(6)-[(R)-S(8)-aminomethyldihydrolipoyl]-L-lysyl-[glycine-cleavage complex H protein] + CO2. The glycine cleavage system catalyzes the degradation of glycine. The P protein binds the alpha-amino group of glycine through its pyridoxal phosphate cofactor; CO(2) is released and the remaining methylamine moiety is then transferred to the lipoamide cofactor of the H protein. The sequence is that of Probable glycine dehydrogenase (decarboxylating) subunit 1 from Bacillus mycoides (strain KBAB4) (Bacillus weihenstephanensis).